A 525-amino-acid chain; its full sequence is Beta-galactoside alpha-2,6-sialyltransferase 2 (525 aa).

At 1 to 11 (MKPHLKQWRQR) the chain is on the cytoplasmic side. The chain crosses the membrane as a helical; Signal-anchor for type II membrane protein span at residues 12-32 (MLFAIFVWGLLFLAIFIYFTN). Over 33–525 (SNPAAPMPSS…PVTRPNNTNT (493 aa)) the chain is Lumenal. Disordered stretches follow at residues 85–107 (SASP…DGFD) and 145–183 (RQGA…PEEA). 3 cysteine pairs are disulfide-bonded: Cys249/Cys515, Cys292/Cys444, and Cys462/Cys473. Asn303 and Asn333 each carry an N-linked (GlcNAc...) asparagine glycan. Asn521 carries an N-linked (GlcNAc...) asparagine glycan.

The protein belongs to the glycosyltransferase 29 family.

It localises to the golgi apparatus. The protein resides in the golgi stack membrane. The catalysed reaction is a beta-D-galactoside + CMP-N-acetyl-beta-neuraminate = an N-acetyl-alpha-neuraminyl-(2-&gt;6)-beta-D-galactosyl derivative + CMP + H(+). Functionally, transfers sialic acid from the donor of substrate CMP-sialic acid to galactose containing acceptor substrates. Has alpha-2,6-sialyltransferase activity toward oligosaccharides that have the Gal-beta-1,4-GlcNAc sequence at the non-reducing end of their carbohydrate groups, but it has weak or no activities toward glycoproteins and glycolipids. In Rattus norvegicus (Rat), this protein is Beta-galactoside alpha-2,6-sialyltransferase 2 (St6gal2).